The following is a 263-amino-acid chain: 3-deoxy-manno-octulosonate cytidylyltransferase (263 aa).

Belongs to the KdsB family.

Its subcellular location is the cytoplasm. The enzyme catalyses 3-deoxy-alpha-D-manno-oct-2-ulosonate + CTP = CMP-3-deoxy-beta-D-manno-octulosonate + diphosphate. The protein operates within nucleotide-sugar biosynthesis; CMP-3-deoxy-D-manno-octulosonate biosynthesis; CMP-3-deoxy-D-manno-octulosonate from 3-deoxy-D-manno-octulosonate and CTP: step 1/1. It participates in bacterial outer membrane biogenesis; lipopolysaccharide biosynthesis. Activates KDO (a required 8-carbon sugar) for incorporation into bacterial lipopolysaccharide in Gram-negative bacteria. The chain is 3-deoxy-manno-octulosonate cytidylyltransferase from Burkholderia thailandensis (strain ATCC 700388 / DSM 13276 / CCUG 48851 / CIP 106301 / E264).